Consider the following 151-residue polypeptide: Nucleoside diphosphate kinase (151 aa).

6 residues coordinate ATP: Lys10, Phe58, Arg86, Thr92, Arg103, and Asn113. Catalysis depends on His116, which acts as the Pros-phosphohistidine intermediate.

It belongs to the NDK family. In terms of assembly, homotetramer. Mg(2+) serves as cofactor.

It is found in the cytoplasm. The catalysed reaction is dZDP + ATP = dZTP + ADP. It carries out the reaction a 2'-deoxyribonucleoside 5'-diphosphate + ATP = a 2'-deoxyribonucleoside 5'-triphosphate + ADP. It catalyses the reaction a ribonucleoside 5'-diphosphate + ATP = a ribonucleoside 5'-triphosphate + ADP. It functions in the pathway purine metabolism. Its function is as follows. Major role in the synthesis of nucleoside triphosphates other than ATP. The ATP gamma phosphate is transferred to the NDP beta phosphate via a ping-pong mechanism, using a phosphorylated active-site intermediate. Functionally, (Microbial infection) Catalyzes the phosphorylation of dZDP to dZTP, when the bacterium is infected by a phage that produces the substrate for the synthesis of dZTP (2- amino-2'-deoxyadenosine 5'-triphosphate), which is then used by the phage as a DNA polymerase substrate. In Synechococcus sp. (strain CC9605), this protein is Nucleoside diphosphate kinase.